The following is a 462-amino-acid chain: Tubby-like F-box protein 7 (462 aa).

An F-box domain is found at Ser-54–Gly-109. Disordered regions lie at residues Phe-317 to Asn-338 and Gln-383 to Asn-418. Low complexity predominate over residues Gln-383–Ser-417.

This sequence belongs to the TUB family. Ubiquitous.

The polypeptide is Tubby-like F-box protein 7 (TULP7) (Oryza sativa subsp. japonica (Rice)).